The primary structure comprises 260 residues: Exosome complex component Rrp42 (260 aa).

This sequence belongs to the RNase PH family. Rrp42 subfamily. In terms of assembly, component of the archaeal exosome complex. Forms a hexameric ring-like arrangement composed of 3 Rrp41-Rrp42 heterodimers. The hexameric ring associates with a trimer of Rrp4 and/or Csl4 subunits.

The protein resides in the cytoplasm. Its function is as follows. Non-catalytic component of the exosome, which is a complex involved in RNA degradation. Contributes to the structuring of the Rrp41 active site. The polypeptide is Exosome complex component Rrp42 (Thermoplasma acidophilum (strain ATCC 25905 / DSM 1728 / JCM 9062 / NBRC 15155 / AMRC-C165)).